We begin with the raw amino-acid sequence, 368 residues long: Phosphoribosylformylglycinamidine cyclo-ligase (368 aa).

Belongs to the AIR synthase family.

It localises to the cytoplasm. It catalyses the reaction 2-formamido-N(1)-(5-O-phospho-beta-D-ribosyl)acetamidine + ATP = 5-amino-1-(5-phospho-beta-D-ribosyl)imidazole + ADP + phosphate + H(+). It participates in purine metabolism; IMP biosynthesis via de novo pathway; 5-amino-1-(5-phospho-D-ribosyl)imidazole from N(2)-formyl-N(1)-(5-phospho-D-ribosyl)glycinamide: step 2/2. This Chelativorans sp. (strain BNC1) protein is Phosphoribosylformylglycinamidine cyclo-ligase.